Reading from the N-terminus, the 305-residue chain is Fumarylacetoacetate hydrolase domain-containing protein 2 homolog (305 aa).

Glu141, Glu143, and Asp172 together coordinate a divalent metal cation.

It belongs to the FAH family. Ca(2+) is required as a cofactor. It depends on Mg(2+) as a cofactor.

Functionally, may have hydrolase activity. The chain is Fumarylacetoacetate hydrolase domain-containing protein 2 homolog (fahd2) from Dictyostelium discoideum (Social amoeba).